The sequence spans 614 residues: Threonine--tRNA ligase (614 aa).

An editing domain region spans residues 1-138 (MRTLMIHSDY…HPLSELSRTI (138 aa)). A disordered region spans residues 133–157 (ELSRTITTEPEEESEDSEEEPSEPS). Residues 141–154 (EPEEESEDSEEEPS) show a composition bias toward acidic residues. Positions 200–495 (PHVRLMREKE…TDKGNKPSLP (296 aa)) are catalytic. 3 residues coordinate Zn(2+): Cys292, His344, and His466.

The protein belongs to the class-II aminoacyl-tRNA synthetase family. Homodimer. Zn(2+) is required as a cofactor.

The protein resides in the cytoplasm. It carries out the reaction tRNA(Thr) + L-threonine + ATP = L-threonyl-tRNA(Thr) + AMP + diphosphate + H(+). Functionally, catalyzes the attachment of threonine to tRNA(Thr) in a two-step reaction: L-threonine is first activated by ATP to form Thr-AMP and then transferred to the acceptor end of tRNA(Thr). Also edits incorrectly charged L-seryl-tRNA(Thr). The chain is Threonine--tRNA ligase from Methanosphaera stadtmanae (strain ATCC 43021 / DSM 3091 / JCM 11832 / MCB-3).